Here is a 160-residue protein sequence, read N- to C-terminus: Lipoprotein signal peptidase (160 aa).

2 helical membrane-spanning segments follow: residues 59 to 79 (PEGI…YVWI) and 84 to 104 (SPLF…NLID). Active-site residues include aspartate 113 and aspartate 139. A helical membrane pass occupies residues 132 to 152 (WPIFNIADACITIGACLLFFF).

It belongs to the peptidase A8 family.

The protein resides in the cell inner membrane. The enzyme catalyses Release of signal peptides from bacterial membrane prolipoproteins. Hydrolyzes -Xaa-Yaa-Zaa-|-(S,diacylglyceryl)Cys-, in which Xaa is hydrophobic (preferably Leu), and Yaa (Ala or Ser) and Zaa (Gly or Ala) have small, neutral side chains.. It participates in protein modification; lipoprotein biosynthesis (signal peptide cleavage). This protein specifically catalyzes the removal of signal peptides from prolipoproteins. The protein is Lipoprotein signal peptidase of Chlorobaculum parvum (strain DSM 263 / NCIMB 8327) (Chlorobium vibrioforme subsp. thiosulfatophilum).